A 180-amino-acid chain; its full sequence is Ribosome rescue factor SmrB (180 aa).

Residues Leu-98–Ala-173 enclose the Smr domain.

It belongs to the SmrB family. Associates with collided ribosomes, but not with correctly translating polysomes.

Its function is as follows. Acts as a ribosome collision sensor. Detects stalled/collided disomes (pairs of ribosomes where the leading ribosome is stalled and a second ribosome has collided with it) and endonucleolytically cleaves mRNA at the 5' boundary of the stalled ribosome. Stalled/collided disomes form a new interface (primarily via the 30S subunits) that binds SmrB. Cleaved mRNA becomes available for tmRNA ligation, leading to ribosomal subunit dissociation and rescue of stalled ribosomes. The protein is Ribosome rescue factor SmrB of Pectobacterium carotovorum subsp. carotovorum (strain PC1).